We begin with the raw amino-acid sequence, 333 residues long: Anthranilate phosphoribosyltransferase (333 aa).

5-phospho-alpha-D-ribose 1-diphosphate is bound by residues glycine 80, 83–84 (GD), threonine 88, 90–93 (NLST), 108–116 (KHGNRSASG), and serine 120. Residue glycine 80 participates in anthranilate binding. Serine 92 contributes to the Mg(2+) binding site. Position 111 (asparagine 111) interacts with anthranilate. Arginine 166 contacts anthranilate. 2 residues coordinate Mg(2+): aspartate 224 and glutamate 225.

This sequence belongs to the anthranilate phosphoribosyltransferase family. As to quaternary structure, homodimer. It depends on Mg(2+) as a cofactor.

The enzyme catalyses N-(5-phospho-beta-D-ribosyl)anthranilate + diphosphate = 5-phospho-alpha-D-ribose 1-diphosphate + anthranilate. Its pathway is amino-acid biosynthesis; L-tryptophan biosynthesis; L-tryptophan from chorismate: step 2/5. In terms of biological role, catalyzes the transfer of the phosphoribosyl group of 5-phosphorylribose-1-pyrophosphate (PRPP) to anthranilate to yield N-(5'-phosphoribosyl)-anthranilate (PRA). The chain is Anthranilate phosphoribosyltransferase from Pyrobaculum aerophilum (strain ATCC 51768 / DSM 7523 / JCM 9630 / CIP 104966 / NBRC 100827 / IM2).